The following is a 304-amino-acid chain: tRNA-5-methyluridine(54) 2-sulfurtransferase (304 aa).

The Zn(2+) site is built by C3, C6, C22, and H25. ATP is bound by residues A53 and I79. [4Fe-4S] cluster-binding residues include C131 and C134. 2 residues coordinate ATP: R138 and G157. C224 lines the [4Fe-4S] cluster pocket. Zn(2+) is bound by residues C274, C277, C286, and C289.

This sequence belongs to the TtcA family. TtuA subfamily. Homodimer. Requires [4Fe-4S] cluster as cofactor. It depends on Mg(2+) as a cofactor.

It carries out the reaction 5-methyluridine(54) in tRNA + hydrogen sulfide + ATP = 5-methyl-2-thiouridine(54) in tRNA + AMP + diphosphate. It functions in the pathway tRNA modification. Its function is as follows. Catalyzes the ATP-dependent 2-thiolation of 5-methyluridine residue at position 54 in the T loop of tRNAs, leading to 5-methyl-2-thiouridine (m(5)s(2)U or s(2)T). This modification allows thermal stabilization of tRNAs in thermophilic microorganisms, and is required for cell growth at high temperatures. Can use free sulfide as sulfur source in vitro. The sequence is that of tRNA-5-methyluridine(54) 2-sulfurtransferase from Thermotoga maritima (strain ATCC 43589 / DSM 3109 / JCM 10099 / NBRC 100826 / MSB8).